The following is a 168-amino-acid chain: Photosystem I assembly protein Ycf3 (168 aa).

TPR repeat units follow at residues 35 to 68 (AFTY…EIDP), 72 to 105 (SYIL…NPFL), and 120 to 153 (GEQA…TPGN).

This sequence belongs to the Ycf3 family.

It is found in the plastid. It localises to the chloroplast thylakoid membrane. Essential for the assembly of the photosystem I (PSI) complex. May act as a chaperone-like factor to guide the assembly of the PSI subunits. The sequence is that of Photosystem I assembly protein Ycf3 from Daucus carota (Wild carrot).